Reading from the N-terminus, the 486-residue chain is Glycogen synthase (486 aa).

ADP-alpha-D-glucose is bound at residue Lys20.

The protein belongs to the glycosyltransferase 1 family. Bacterial/plant glycogen synthase subfamily.

The enzyme catalyses [(1-&gt;4)-alpha-D-glucosyl](n) + ADP-alpha-D-glucose = [(1-&gt;4)-alpha-D-glucosyl](n+1) + ADP + H(+). It participates in glycan biosynthesis; glycogen biosynthesis. Synthesizes alpha-1,4-glucan chains using ADP-glucose. This is Glycogen synthase from Aeromonas salmonicida (strain A449).